We begin with the raw amino-acid sequence, 403 residues long: Phosphopentomutase (403 aa).

Positions 13, 298, 303, 339, 340, and 351 each coordinate Mn(2+).

The protein belongs to the phosphopentomutase family. Mn(2+) serves as cofactor.

The protein localises to the cytoplasm. The enzyme catalyses 2-deoxy-alpha-D-ribose 1-phosphate = 2-deoxy-D-ribose 5-phosphate. It carries out the reaction alpha-D-ribose 1-phosphate = D-ribose 5-phosphate. The protein operates within carbohydrate degradation; 2-deoxy-D-ribose 1-phosphate degradation; D-glyceraldehyde 3-phosphate and acetaldehyde from 2-deoxy-alpha-D-ribose 1-phosphate: step 1/2. Its function is as follows. Isomerase that catalyzes the conversion of deoxy-ribose 1-phosphate (dRib-1-P) and ribose 1-phosphate (Rib-1-P) to deoxy-ribose 5-phosphate (dRib-5-P) and ribose 5-phosphate (Rib-5-P), respectively. This chain is Phosphopentomutase, found in Streptococcus pyogenes serotype M4 (strain MGAS10750).